Here is a 941-residue protein sequence, read N- to C-terminus: Endoglucanase (941 aa).

Positions 1-29 (MKIKQIKQSLSLLLIITLIMSLFVPMASA) are cleaved as a signal peptide. SLH domains follow at residues 37 to 94 (NAFP…GLEA), 95 to 158 (SSKD…LSLP), and 161 to 224 (QREY…DYLY). Glu-373 functions as the Proton donor in the catalytic mechanism. Residue Glu-485 is the Nucleophile of the active site.

Belongs to the glycosyl hydrolase 5 (cellulase A) family.

The catalysed reaction is Endohydrolysis of (1-&gt;4)-beta-D-glucosidic linkages in cellulose, lichenin and cereal beta-D-glucans.. The protein is Endoglucanase of Bacillus sp. (strain KSM-635).